The chain runs to 207 residues: Peptidyl-tRNA hydrolase (207 aa).

Tyrosine 17 is a binding site for tRNA. The Proton acceptor role is filled by histidine 22. TRNA contacts are provided by phenylalanine 68, asparagine 70, and asparagine 116.

Belongs to the PTH family. Monomer.

Its subcellular location is the cytoplasm. The catalysed reaction is an N-acyl-L-alpha-aminoacyl-tRNA + H2O = an N-acyl-L-amino acid + a tRNA + H(+). Its function is as follows. Hydrolyzes ribosome-free peptidyl-tRNAs (with 1 or more amino acids incorporated), which drop off the ribosome during protein synthesis, or as a result of ribosome stalling. Catalyzes the release of premature peptidyl moieties from peptidyl-tRNA molecules trapped in stalled 50S ribosomal subunits, and thus maintains levels of free tRNAs and 50S ribosomes. This chain is Peptidyl-tRNA hydrolase, found in Buchnera aphidicola subsp. Baizongia pistaciae (strain Bp).